We begin with the raw amino-acid sequence, 340 residues long: UDP-N-acetylglucosamine--N-acetylmuramyl-(pentapeptide) pyrophosphoryl-undecaprenol N-acetylglucosamine transferase (340 aa).

Residues 10–12 (TGG), Asn-124, Ser-179, and Gln-277 contribute to the UDP-N-acetyl-alpha-D-glucosamine site.

Belongs to the glycosyltransferase 28 family. MurG subfamily.

Its subcellular location is the cell inner membrane. The catalysed reaction is di-trans,octa-cis-undecaprenyl diphospho-N-acetyl-alpha-D-muramoyl-L-alanyl-D-glutamyl-meso-2,6-diaminopimeloyl-D-alanyl-D-alanine + UDP-N-acetyl-alpha-D-glucosamine = di-trans,octa-cis-undecaprenyl diphospho-[N-acetyl-alpha-D-glucosaminyl-(1-&gt;4)]-N-acetyl-alpha-D-muramoyl-L-alanyl-D-glutamyl-meso-2,6-diaminopimeloyl-D-alanyl-D-alanine + UDP + H(+). Its pathway is cell wall biogenesis; peptidoglycan biosynthesis. Functionally, cell wall formation. Catalyzes the transfer of a GlcNAc subunit on undecaprenyl-pyrophosphoryl-MurNAc-pentapeptide (lipid intermediate I) to form undecaprenyl-pyrophosphoryl-MurNAc-(pentapeptide)GlcNAc (lipid intermediate II). The protein is UDP-N-acetylglucosamine--N-acetylmuramyl-(pentapeptide) pyrophosphoryl-undecaprenol N-acetylglucosamine transferase of Sulfurimonas denitrificans (strain ATCC 33889 / DSM 1251) (Thiomicrospira denitrificans (strain ATCC 33889 / DSM 1251)).